The sequence spans 80 residues: Late cornified envelope protein 6A (80 aa).

Positions 1–10 are enriched in polar residues; that stretch reads MSQQKQQSWK. Disordered stretches follow at residues 1–21 and 35–60; these read MSQQKQQSWKPPNVPKCSPPQ and GAPHSEGCHSSSQRPEVQKPRRARQK.

Belongs to the LCE family.

Precursors of the cornified envelope of the stratum corneum. This chain is Late cornified envelope protein 6A (LCE6A), found in Homo sapiens (Human).